The chain runs to 71 residues: Metallothionein-like protein 1 (71 aa).

Belongs to the metallothionein superfamily. Type 15 family.

Its function is as follows. Metallothioneins have a high content of cysteine residues that bind various heavy metals. The chain is Metallothionein-like protein 1 (MT1) from Casuarina glauca (Swamp oak).